Reading from the N-terminus, the 491-residue chain is MIQSTRISMGLFFKYFLSLTKIDPGQNYISLPSIKSSTHIALLFMVSMGTQKLKAQSFFIFSLLLTLILFCITTLYNENTNVKLIPQMNYLMVVVALFFLNAVIFLFMLMKYFTNKQILPTLILSLAFLSGLIYLVETIVIIHKPINGSTLIQTKSNDVSIFYIFRQLSFICLTSLALFCYGKDNILDNNKKKTGILLLALIPFLVFPLLAHNLSSYNADYSLYVVDYCPDNHTATWGINYTKILVCLWAFLLFFIIMRTRLASELWPLIALLCLASLCCNLLLLTLDEYNYTIWYISRGIEVSSKLFVVSFLIYNIFQELQLSSKLAVHDVLTNIYNRRYFFNSVESLLSRPVVKDFCVMLVDINQFKRINAQWGHRVGDKVLVSIVDIIQQSIRPDDILARLEGEVFGLLFTELNSAQAKIIAERMRKNVELLTGFSNRYDVPEQMTISIGTVFSTGDTRNISLVMTEADKALREAKSEGGNKVIIHHI.

Topologically, residues Met1–Lys54 are cytoplasmic. Residues Ala55–Leu75 form a helical membrane-spanning segment. Topologically, residues Tyr76–Asn89 are periplasmic. Residues Tyr90–Met110 traverse the membrane as a helical segment. Residues Lys111–Thr121 are Cytoplasmic-facing. Residues Leu122 to Ile142 traverse the membrane as a helical segment. The Periplasmic segment spans residues His143–Asp158. The chain crosses the membrane as a helical span at residues Val159–Phe179. Residues Cys180–Lys193 lie on the Cytoplasmic side of the membrane. The helical transmembrane segment at Thr194–Leu214 threads the bilayer. The Periplasmic segment spans residues Ser215–Thr236. Residues Trp237 to Ile257 traverse the membrane as a helical segment. The Cytoplasmic segment spans residues Met258–Glu265. The chain crosses the membrane as a helical span at residues Leu266 to Thr286. Over Leu287–Thr293 the chain is Periplasmic. A helical transmembrane segment spans residues Ile294 to Ile314. Residues Tyr315–Ile491 are Cytoplasmic-facing. The GGDEF domain maps to Lys356–Ile491. Residues Asp364 and Ile365 each contribute to the Mg(2+) site. Substrate-binding residues include Asn372, His377, and Asp381. A Mg(2+)-binding site is contributed by Glu407. Glu407 functions as the Proton acceptor in the catalytic mechanism. Arg427 contacts substrate.

Homodimer. The cofactor is Mg(2+).

The protein localises to the cell inner membrane. The enzyme catalyses 2 GTP = 3',3'-c-di-GMP + 2 diphosphate. Its pathway is purine metabolism; 3',5'-cyclic di-GMP biosynthesis. Catalyzes the synthesis of cyclic-di-GMP (c-di-GMP) via the condensation of 2 GTP molecules. In Escherichia coli (strain K12), this protein is Probable diguanylate cyclase CdgI.